Reading from the N-terminus, the 103-residue chain is Large ribosomal subunit protein bL21 (103 aa).

Belongs to the bacterial ribosomal protein bL21 family. As to quaternary structure, part of the 50S ribosomal subunit. Contacts protein L20.

Functionally, this protein binds to 23S rRNA in the presence of protein L20. The sequence is that of Large ribosomal subunit protein bL21 from Actinobacillus pleuropneumoniae serotype 5b (strain L20).